The chain runs to 583 residues: MCGILAVLGCSDPSRAKRVRVLELSRRLKHRGPEWSGLHQHGDCYLAQQRLAIVDPASGDQPLFNEDNPSIVTVNGEIYNHEDLRKQLSNHTFRTGSDCDVIAHLYEEYGEDFVDMLDGIFSFVPLDTRDNSYIVARDAIGVTSLYIGWGLDGSVWISSEMKGLNDDCEHFECFPPGHLYSSKDSGFRRWYNPSWYSEAIPSAPYDPLALRHAFEKAVVKRLMTDVPFGVLLSGGLDSSLVASITSRYLATTKAAEQWGSKLHSFCVGLEGSPDLKAGKEVADYLGTVHHEFTFTVQDGIDAIEDVIYHVETYDVTSIRASTPMFLMSRKIKSLGVKWVISGEGSDEIFGGYLYFHKAPNKEEFHEETCRKIKALHQYDCQRANKSTYAWGLEARVPFLDKAFINVAMNIDPENKMIKRDEGRIEKYILRKAFDDEENPYLPKHILYRQKEQFSDGVGYSWIDGLKAHAAKHVTDKMMLNAGNIFPHNTPNTKEAYYYRMIFERFFPQNSARLTVPGGPTVACSTAKAVEWDAAWSNNLDPSGRAALGVHDSAYENHNKVNKTVEFEKIIPLEAAPVELAIQG.

Cys-2 acts as the For GATase activity in catalysis. The Glutamine amidotransferase type-2 domain maps to 2–185; that stretch reads CGILAVLGCS…PGHLYSSKDS (184 aa). L-glutamine is bound by residues 50 to 54, 75 to 77, and Asp-98; these read RLAIV and NGE. Residues Leu-231, Val-267, and 341–342 contribute to the ATP site; that span reads SG. In terms of domain architecture, Asparagine synthetase spans 237–516; that stretch reads DSSLVASITS…PQNSARLTVP (280 aa).

Roots.

It catalyses the reaction L-aspartate + L-glutamine + ATP + H2O = L-asparagine + L-glutamate + AMP + diphosphate + H(+). Its pathway is amino-acid biosynthesis; L-asparagine biosynthesis; L-asparagine from L-aspartate (L-Gln route): step 1/1. This chain is Asparagine synthetase, root [glutamine-hydrolyzing] (AS2), found in Pisum sativum (Garden pea).